Reading from the N-terminus, the 233-residue chain is Small ribosomal subunit protein uS3 (233 aa).

In terms of domain architecture, KH type-2 spans 39–107 (IRAFLKRKLY…DVNINIKEER (69 aa)). The segment covering 212-222 (MQPEKTEESAP) has biased composition (basic and acidic residues). Residues 212-233 (MQPEKTEESAPAKKPRRTRRGK) are disordered. A compositionally biased stretch (basic residues) spans 224–233 (KKPRRTRRGK).

It belongs to the universal ribosomal protein uS3 family. In terms of assembly, part of the 30S ribosomal subunit. Forms a tight complex with proteins S10 and S14.

Its function is as follows. Binds the lower part of the 30S subunit head. Binds mRNA in the 70S ribosome, positioning it for translation. This chain is Small ribosomal subunit protein uS3, found in Campylobacter jejuni subsp. jejuni serotype O:6 (strain 81116 / NCTC 11828).